The primary structure comprises 137 residues: Large ribosomal subunit protein uL16 (137 aa).

This sequence belongs to the universal ribosomal protein uL16 family. As to quaternary structure, part of the 50S ribosomal subunit.

Its function is as follows. Binds 23S rRNA and is also seen to make contacts with the A and possibly P site tRNAs. This is Large ribosomal subunit protein uL16 from Bartonella quintana (strain Toulouse) (Rochalimaea quintana).